The chain runs to 348 residues: sn-glycerol-3-phosphate import ATP-binding protein UgpC 3 (348 aa).

The ABC transporter domain occupies 4–234; that stretch reads INIVDVKKNY…PASLFVAGFI (231 aa). 36-43 lines the ATP pocket; that stretch reads GPSGCGKS.

This sequence belongs to the ABC transporter superfamily. sn-glycerol-3-phosphate importer (TC 3.A.1.1.3) family. The complex is composed of two ATP-binding proteins (UgpC), two transmembrane proteins (UgpA and UgpE) and a solute-binding protein (UgpB).

The protein resides in the cell inner membrane. The catalysed reaction is sn-glycerol 3-phosphate(out) + ATP + H2O = sn-glycerol 3-phosphate(in) + ADP + phosphate + H(+). Its function is as follows. Part of the ABC transporter complex UgpBAEC involved in sn-glycerol-3-phosphate (G3P) import. Responsible for energy coupling to the transport system. The protein is sn-glycerol-3-phosphate import ATP-binding protein UgpC 3 of Rhizobium etli (strain ATCC 51251 / DSM 11541 / JCM 21823 / NBRC 15573 / CFN 42).